A 366-amino-acid polypeptide reads, in one-letter code: tRNA/tmRNA (uracil-C(5))-methyltransferase (366 aa).

S-adenosyl-L-methionine is bound by residues Q189, Y217, N222, E238, and D298. The active-site Nucleophile is C323. E357 serves as the catalytic Proton acceptor.

This sequence belongs to the class I-like SAM-binding methyltransferase superfamily. RNA M5U methyltransferase family. TrmA subfamily.

The enzyme catalyses uridine(54) in tRNA + S-adenosyl-L-methionine = 5-methyluridine(54) in tRNA + S-adenosyl-L-homocysteine + H(+). It catalyses the reaction uridine(341) in tmRNA + S-adenosyl-L-methionine = 5-methyluridine(341) in tmRNA + S-adenosyl-L-homocysteine + H(+). In terms of biological role, dual-specificity methyltransferase that catalyzes the formation of 5-methyluridine at position 54 (m5U54) in all tRNAs, and that of position 341 (m5U341) in tmRNA (transfer-mRNA). This chain is tRNA/tmRNA (uracil-C(5))-methyltransferase, found in Shewanella oneidensis (strain ATCC 700550 / JCM 31522 / CIP 106686 / LMG 19005 / NCIMB 14063 / MR-1).